The chain runs to 184 residues: Ribosome-recycling factor (184 aa).

It belongs to the RRF family.

It localises to the cytoplasm. In terms of biological role, responsible for the release of ribosomes from messenger RNA at the termination of protein biosynthesis. May increase the efficiency of translation by recycling ribosomes from one round of translation to another. This is Ribosome-recycling factor from Hyphomonas neptunium (strain ATCC 15444).